Reading from the N-terminus, the 152-residue chain is Large ribosomal subunit protein eL32 (152 aa).

The protein belongs to the eukaryotic ribosomal protein eL32 family.

This chain is Large ribosomal subunit protein eL32 (rpl32e), found in Pyrobaculum aerophilum (strain ATCC 51768 / DSM 7523 / JCM 9630 / CIP 104966 / NBRC 100827 / IM2).